The following is a 370-amino-acid chain: Cobalt-precorrin-5B C(1)-methyltransferase (370 aa).

Belongs to the CbiD family.

The catalysed reaction is Co-precorrin-5B + S-adenosyl-L-methionine = Co-precorrin-6A + S-adenosyl-L-homocysteine. It participates in cofactor biosynthesis; adenosylcobalamin biosynthesis; cob(II)yrinate a,c-diamide from sirohydrochlorin (anaerobic route): step 6/10. Catalyzes the methylation of C-1 in cobalt-precorrin-5B to form cobalt-precorrin-6A. In Prochlorococcus marinus (strain MIT 9215), this protein is Cobalt-precorrin-5B C(1)-methyltransferase.